Consider the following 62-residue polypeptide: Small ribosomal subunit protein eS27 (62 aa).

Residues cysteine 17, cysteine 20, cysteine 36, and cysteine 39 each contribute to the Zn(2+) site. The segment at 17–39 adopts a C4-type zinc-finger fold; that stretch reads CNDCENEQIIFGSASRKITCVVC.

This sequence belongs to the eukaryotic ribosomal protein eS27 family. In terms of assembly, part of the 30S ribosomal subunit. Zn(2+) is required as a cofactor.

This is Small ribosomal subunit protein eS27 from Methanosarcina barkeri (strain Fusaro / DSM 804).